The chain runs to 244 residues: Histone H1, orphon (244 aa).

The segment covering Met1–Pro21 has biased composition (low complexity). 2 disordered regions span residues Met1–Glu59 and Gln113–Lys244. Positions Pro35–Pro45 are enriched in basic and acidic residues. An H15 domain is found at Thr53–Pro127. Low complexity predominate over residues Ala186 to Pro203. Residues Ala213 to Lys244 show a composition bias toward basic residues.

The protein belongs to the histone H1/H5 family.

The protein resides in the nucleus. The protein localises to the chromosome. Functionally, histones H1 are necessary for the condensation of nucleosome chains into higher-order structures. The protein is Histone H1, orphon of Chironomus thummi thummi (Midge).